A 396-amino-acid polypeptide reads, in one-letter code: UPF0164 protein TP_0858 (396 aa).

Residues 1–28 form the signal peptide; sequence MGTMIRHTFTHRCGALLCALALGSSTMA.

It belongs to the UPF0164 family.

This Treponema pallidum (strain Nichols) protein is UPF0164 protein TP_0858.